The chain runs to 179 residues: Coiled-coil domain-containing protein 32 (179 aa).

Positions 36-65 are disordered; the sequence is DNAFSDSFMDSHPAGESHTAAADSAVQPAG. A coiled-coil region spans residues 75-98; sequence EVYLASLEKKLRRIKGLNEEVTSK. The segment at 158-179 is disordered; that stretch reads LIPPESQAEKPEAGDKPAAAEQ.

Interacts with AP2S1; the interaction is direct and mediates association with adaptor protein complex 2 (AP-2).

The protein localises to the membrane. It localises to the coated pit. Its function is as follows. Regulates clathrin-mediated endocytsois of cargos such as transferrin probably through the association and modulation of adaptor protein complex 2 (AP-2). Has a role in ciliogenesis. Required for proper cephalic and left/right axis development. This is Coiled-coil domain-containing protein 32 (Ccdc32) from Mus musculus (Mouse).